The sequence spans 428 residues: 3-phosphoshikimate 1-carboxyvinyltransferase (428 aa).

3 residues coordinate 3-phosphoshikimate: Lys-23, Ser-24, and Arg-28. Residue Lys-23 coordinates phosphoenolpyruvate. Gly-97 and Arg-125 together coordinate phosphoenolpyruvate. 7 residues coordinate 3-phosphoshikimate: Ser-170, Ser-171, Gln-172, Ser-198, Asp-314, Asn-337, and Lys-341. Gln-172 contributes to the phosphoenolpyruvate binding site. The Proton acceptor role is filled by Asp-314. Phosphoenolpyruvate-binding residues include Arg-345, Arg-387, and Lys-412.

Belongs to the EPSP synthase family. As to quaternary structure, monomer.

The protein resides in the cytoplasm. The enzyme catalyses 3-phosphoshikimate + phosphoenolpyruvate = 5-O-(1-carboxyvinyl)-3-phosphoshikimate + phosphate. The protein operates within metabolic intermediate biosynthesis; chorismate biosynthesis; chorismate from D-erythrose 4-phosphate and phosphoenolpyruvate: step 6/7. In terms of biological role, catalyzes the transfer of the enolpyruvyl moiety of phosphoenolpyruvate (PEP) to the 5-hydroxyl of shikimate-3-phosphate (S3P) to produce enolpyruvyl shikimate-3-phosphate and inorganic phosphate. This Edwardsiella ictaluri (strain 93-146) protein is 3-phosphoshikimate 1-carboxyvinyltransferase.